A 99-amino-acid polypeptide reads, in one-letter code: MRIAKVRGTVVSTYKEPSLQGVKFLVVQFLDEAGQALQEYEVAADMVGAGVDEWVLISRGSQARHVRDCQERPVDAAVIAIIDTVNVENRSVYDKREHS.

A BMV domain is found at 1–83 (MRIAKVRGTV…VDAAVIAIID (83 aa)).

The protein belongs to the CcmL/EutN family. CcmL subfamily. In terms of assembly, homopentamer. Interacts with full-length CcmM.

Its subcellular location is the carboxysome. Functionally, probably forms vertices in the carboxysome, a polyhedral inclusion where RuBisCO (ribulose bisphosphate carboxylase, rbcL-rbcS) is sequestered. Has been modeled to induce curvature upon insertion into an otherwise flat hexagonal molecular layer of CcmK subunits. In terms of biological role, beta-carboxysome assembly initiates when soluble RuBisCO is condensed into a liquid matrix in a pre-carboxysome by the RbcS-like domains of probably both CcmM58 and CcmM35. CcmN interacts with the N-terminus of CcmM58, and then recruits the CcmK2 major shell protein via CcmN's encapsulation peptide. Shell formation requires CcmK proteins and CcmO. CcmL caps the otherwise elongated carboxysome. Once fully encapsulated carboxysomes are formed, they migrate within the cell probably via interactions with the cytoskeleton. This is Carboxysome shell vertex protein CcmL from Synechococcus elongatus (strain ATCC 33912 / PCC 7942 / FACHB-805) (Anacystis nidulans R2).